A 333-amino-acid polypeptide reads, in one-letter code: Secreted mono- and diacylglycerol lipase 1 (333 aa).

A signal peptide spans 1-16; that stretch reads MMLILSILSIIAFAAA. Disulfide bonds link cysteine 56–cysteine 268 and cysteine 276–cysteine 298. The active-site Nucleophile is the serine 176. Residues aspartate 230 and histidine 288 contribute to the active site.

The protein belongs to the AB hydrolase superfamily. Lipase family. Class 3 subfamily.

Its subcellular location is the secreted. It carries out the reaction a monoacylglycerol + H2O = glycerol + a fatty acid + H(+). The enzyme catalyses a diacylglycerol + H2O = a monoacylglycerol + a fatty acid + H(+). Functionally, secreted mono- and diacylglycerol lipase that allows the use of hydrolyzed lipids as carbon source and might play a role in pathogenicity. Shows lipolytic activity towards olive oil and p-nitrophenylpalmitate. In Fusarium solani (Filamentous fungus), this protein is Secreted mono- and diacylglycerol lipase 1.